Here is a 327-residue protein sequence, read N- to C-terminus: Probable cell division protein WhiA (327 aa).

A DNA-binding region (H-T-H motif) is located at residues S275 to K308.

This sequence belongs to the WhiA family.

Involved in cell division and chromosome segregation. This is Probable cell division protein WhiA from Mycobacterium leprae (strain Br4923).